The sequence spans 585 residues: Ras-specific guanine nucleotide-releasing factor RalGPS1 (585 aa).

The 240-residue stretch at 50-289 (TPEEFASQIT…YKLSLRIEPG (240 aa)) folds into the Ras-GEF domain. 2 disordered regions span residues 289 to 342 (GSSS…KSHS) and 378 to 410 (RSPR…SEEM). The segment covering 303 to 312 (AGPSAGSSSA) has biased composition (low complexity). The PXXP motif lies at 330–333 (PTPP). The span at 385-396 (THTSSTAITNGL) shows a compositional bias: polar residues. In terms of domain architecture, PH spans 459–571 (VPTMEGPLRR…WHKHLDDACK (113 aa)). The required for stimulation of nucleotide exchange by RALA stretch occupies residues 461 to 585 (TMEGPLRRKT…QVPANLMSFE (125 aa)).

In terms of assembly, interacts with the SH3 domains of GRB2, NCK1, PLCG1 and SRC.

The protein resides in the cytoplasm. Its subcellular location is the cell membrane. Its function is as follows. Guanine nucleotide exchange factor for the small GTPase RALA. May be involved in cytoskeleton organization. The polypeptide is Ras-specific guanine nucleotide-releasing factor RalGPS1 (Ralgps1) (Mus musculus (Mouse)).